We begin with the raw amino-acid sequence, 510 residues long: Inositol-3-phosphate synthase 1 (510 aa).

Residues glycine 70, glycine 71, asparagine 72, asparagine 73, aspartate 143, isoleucine 180, glutamine 190, arginine 193, threonine 230, alanine 231, asparagine 232, threonine 233, glycine 281, serine 282, aspartate 306, serine 309, asparagine 340, asparagine 341, aspartate 342, lysine 355, glycine 393, aspartate 394, aspartate 422, and serine 423 each contribute to the NAD(+) site.

This sequence belongs to the myo-inositol 1-phosphate synthase family. NAD(+) is required as a cofactor.

It localises to the cytoplasm. The protein localises to the cytosol. The protein resides in the nucleus. The catalysed reaction is D-glucose 6-phosphate = 1D-myo-inositol 3-phosphate. It functions in the pathway polyol metabolism; myo-inositol biosynthesis; myo-inositol from D-glucose 6-phosphate: step 1/2. Its function is as follows. Key enzyme in myo-inositol biosynthesis pathway that catalyzes the conversion of glucose 6-phosphate to 1-myo-inositol 1-phosphate in a NAD-dependent manner. May play a role in oxidative stress resistance and influences ascorbate levels. The chain is Inositol-3-phosphate synthase 1 from Populus euphratica (Euphrates poplar).